Here is a 353-residue protein sequence, read N- to C-terminus: UPF0283 membrane protein YcjF (353 aa).

The segment covering 1–19 (MSEPLKPRIDFAEPLKEES) has biased composition (basic and acidic residues). Positions 1-29 (MSEPLKPRIDFAEPLKEESTSTFKAQQTF) are disordered. Positions 20-29 (TSTFKAQQTF) are enriched in polar residues. 3 helical membrane passes run 70-90 (MVLG…IQWT), 100-120 (AALG…GSVI), and 213-233 (ESTL…FIAW).

This sequence belongs to the UPF0283 family.

The protein localises to the cell inner membrane. The polypeptide is UPF0283 membrane protein YcjF (Salmonella arizonae (strain ATCC BAA-731 / CDC346-86 / RSK2980)).